We begin with the raw amino-acid sequence, 359 residues long: MCEVFRRLPGTAPGSSPPAPATHRLRLLGRELRVRRFMIFCRFWAKMATNDAVLKRLEQKGAEADQIIEYLKQQVALLKEKAVLQATLREEKKLRVENAKLKKEIEELKQELIQAEIQNGVKQIPVPVQSDTPVQASSAVSTSVIQSTSVSTISCSIKEHSKGGGEEKKVKEKTDKKGEKKEKKLQSAAPSADSKPVDVSRLDLRIGRIVTVKKHPDADSLYVEEVDVGEAAPRTVISGLVNHVPLDQMQNRMVVLLCNLKPAKMRGILSQAMVMCASSPEKVEILAPPNGSVPGDRITFDAFPGEPDKELNPKKKIWEQIQPDLHTNAECVATYKGSPFEVKGKGVCRAQTMANSGIK.

Residues 52–92 (AVLKRLEQKGAEADQIIEYLKQQVALLKEKAVLQATLREEK) are required for fibroblast proliferation. Residues 100–241 (KLKKEIEELK…APRTVISGLV (142 aa)) are interaction with HSP90B1. Residues 149–163 (SVSTISCSIKEHSKG) are required for endothelial cell death. The disordered stretch occupies residues 156-196 (SIKEHSKGGGEEKKVKEKTDKKGEKKEKKLQSAAPSADSKP). Basic and acidic residues predominate over residues 157-185 (IKEHSKGGGEEKKVKEKTDKKGEKKEKKL). The required for endothelial cell migration stretch occupies residues 163-239 (GGGEEKKVKE…EAAPRTVISG (77 aa)). A Glycyl lysine isopeptide (Lys-Gly) (interchain with G-Cter in SUMO1) cross-link involves residue Lys-184. Ser-187 bears the Phosphoserine mark. One can recognise a tRNA-binding domain in the interval 198-299 (DVSRLDLRIG…NGSVPGDRIT (102 aa)). Lys-316 is subject to N6-succinyllysine.

As to quaternary structure, homodimer. Part of the multisynthetase complex (MSC), a multisubunit complex that groups tRNA ligases for Arg (RARS1), Asp (DARS1), Gln (QARS1), Ile (IARS1), Leu (LARS1), Lys (KARS1), Met (MARS1) the bifunctional ligase for Glu and Pro (EPRS1) and the auxiliary subunits AIMP1/p43, AIMP2/p38 and EEF1E1/p18. Interacts (via N-terminus) with RARS1 (via N-terminus). Part of a complex composed of RARS1, QARS1 and AIMP1. Interacts (via C-terminus) with SMURF2. Interacts (via N-terminus) with HSP90B1/gp96 (via C-terminus). Interacts with PSMA7. Interacts with TARS3. In terms of processing, cleaved by caspase-7 in response to apoptosis to produce EMAP-II.

It localises to the nucleus. The protein resides in the cytoplasm. Its subcellular location is the cytosol. The protein localises to the secreted. It is found in the endoplasmic reticulum. It localises to the golgi apparatus. Non-catalytic component of the multisynthase complex. Stimulates the catalytic activity of cytoplasmic arginyl-tRNA synthase. Binds tRNA. Possesses inflammatory cytokine activity. Negatively regulates TGF-beta signaling through stabilization of SMURF2 by binding to SMURF2 and inhibiting its SMAD7-mediated degradation. Involved in glucose homeostasis through induction of glucagon secretion at low glucose levels. Promotes dermal fibroblast proliferation and wound repair. Regulates KDELR1-mediated retention of HSP90B1/gp96 in the endoplasmic reticulum. Plays a role in angiogenesis by inducing endothelial cell migration at low concentrations and endothelian cell apoptosis at high concentrations. Induces maturation of dendritic cells and monocyte cell adhesion. In Cricetulus griseus (Chinese hamster), this protein is Aminoacyl tRNA synthase complex-interacting multifunctional protein 1 (AIMP1).